A 156-amino-acid polypeptide reads, in one-letter code: Small ribosomal subunit protein uS7 (156 aa).

Belongs to the universal ribosomal protein uS7 family. As to quaternary structure, part of the 30S ribosomal subunit. Contacts proteins S9 and S11.

Its function is as follows. One of the primary rRNA binding proteins, it binds directly to 16S rRNA where it nucleates assembly of the head domain of the 30S subunit. Is located at the subunit interface close to the decoding center, probably blocks exit of the E-site tRNA. This Vibrio parahaemolyticus serotype O3:K6 (strain RIMD 2210633) protein is Small ribosomal subunit protein uS7.